A 160-amino-acid chain; its full sequence is Transcriptional repressor NrdR (160 aa).

A compositionally biased stretch (polar residues) spans 1–11 (MRCPNCNSLDT). Positions 1-20 (MRCPNCNSLDTQVKDSRPTE) are disordered. A zinc finger spans residues 3–34 (CPNCNSLDTQVKDSRPTEDSSVIRRRRVCVAC). One can recognise an ATP-cone domain in the interval 49–139 (LTVIKRNGRR…VYRNFREAKD (91 aa)).

It belongs to the NrdR family. Zn(2+) serves as cofactor.

Negatively regulates transcription of bacterial ribonucleotide reductase nrd genes and operons by binding to NrdR-boxes. The polypeptide is Transcriptional repressor NrdR (Bradyrhizobium diazoefficiens (strain JCM 10833 / BCRC 13528 / IAM 13628 / NBRC 14792 / USDA 110)).